Reading from the N-terminus, the 647-residue chain is DNA mismatch repair protein MutL (647 aa).

Belongs to the DNA mismatch repair MutL/HexB family.

This protein is involved in the repair of mismatches in DNA. It is required for dam-dependent methyl-directed DNA mismatch repair. May act as a 'molecular matchmaker', a protein that promotes the formation of a stable complex between two or more DNA-binding proteins in an ATP-dependent manner without itself being part of a final effector complex. The chain is DNA mismatch repair protein MutL from Koribacter versatilis (strain Ellin345).